A 463-amino-acid chain; its full sequence is Nicotinate phosphoribosyltransferase pncB2 (463 aa).

His-202 is modified (phosphohistidine).

The protein belongs to the NAPRTase family. Transiently phosphorylated on a His residue during the reaction cycle. Phosphorylation strongly increases the affinity for substrates and increases the rate of nicotinate D-ribonucleotide production. Dephosphorylation regenerates the low-affinity form of the enzyme, leading to product release.

The enzyme catalyses nicotinate + 5-phospho-alpha-D-ribose 1-diphosphate + ATP + H2O = nicotinate beta-D-ribonucleotide + ADP + phosphate + diphosphate. It participates in cofactor biosynthesis; NAD(+) biosynthesis; nicotinate D-ribonucleotide from nicotinate: step 1/1. Involved in the Preiss-Handler pathway, which is a recycling route that permits the salvage of free nicotinamide (NM) and nicotinic acid (Na) involved in the NAD biosynthesis. Catalyzes the synthesis of beta-nicotinate D-ribonucleotide from nicotinate and 5-phospho-D-ribose 1-phosphate at the expense of ATP. It is not able to use nicotinamide. PncB2 appears to be responsible for the increased salvage synthesis of NAD during infection of host tissues. The sequence is that of Nicotinate phosphoribosyltransferase pncB2 (pncB2) from Mycobacterium tuberculosis (strain CDC 1551 / Oshkosh).